The chain runs to 518 residues: 2-isopropylmalate synthase (518 aa).

The region spanning 5 to 269 (IIVLDTTLRD…STNVRLKELI (265 aa)) is the Pyruvate carboxyltransferase domain. Positions 14, 204, 206, and 240 each coordinate Mn(2+). The regulatory domain stretch occupies residues 397-518 (ELDSFQVVTN…HDSQAPVSAR (122 aa)).

The protein belongs to the alpha-IPM synthase/homocitrate synthase family. LeuA type 1 subfamily. As to quaternary structure, homodimer. Mn(2+) serves as cofactor.

The protein localises to the cytoplasm. It catalyses the reaction 3-methyl-2-oxobutanoate + acetyl-CoA + H2O = (2S)-2-isopropylmalate + CoA + H(+). It participates in amino-acid biosynthesis; L-leucine biosynthesis; L-leucine from 3-methyl-2-oxobutanoate: step 1/4. In terms of biological role, catalyzes the condensation of the acetyl group of acetyl-CoA with 3-methyl-2-oxobutanoate (2-ketoisovalerate) to form 3-carboxy-3-hydroxy-4-methylpentanoate (2-isopropylmalate). The sequence is that of 2-isopropylmalate synthase from Geobacillus sp. (strain Y412MC10).